A 351-amino-acid chain; its full sequence is MAGRSLTSKAEPTAGAVDRAEKAGGQDTSSQKIEDLMEMVQKLQKVGSLEPRVEVLINRINEVQQAKKKANKDLGEARTICEALQKELDSLHGEKVHLKEILSKKQETLRILRLHCQEKESEAHRKHTMLQECKERISALNLQIEEEKNKQRQLRLAFEEQLEDLMGQHKDLWDFHMPERLAKEICALDSSKEQLLKEEKLVKATLEDVKHQLCSLCGAEGPSTLDEGLFLRSQEAAATVQLFQEEHRKAEELLAAAAQRHQQLQQKCQQQQQKRQRLKEELEKHGMQVPAQAQSTQEEEAGPGDVASPKPLKGERPGAAHQAGPDVLIGQEDTLHPDLSPRGFQEIKELF.

Residues 1–10 (MAGRSLTSKA) show a composition bias toward polar residues. Disordered stretches follow at residues 1–31 (MAGR…TSSQ) and 267–351 (KCQQ…KELF). The stretch at 52-290 (RVEVLINRIN…ELEKHGMQVP (239 aa)) forms a coiled coil.

The protein belongs to the SYCE family. Homodimer. Found in a complex with SYCP1 and SYCE2. Interacts with SYCP1, SYCE2 and SYCE3. Interacts with SIX6OS1.

The protein localises to the nucleus. The protein resides in the chromosome. Major component of the transverse central element of synaptonemal complexes (SCS), formed between homologous chromosomes during meiotic prophase. Requires SYCP1 in order to be incorporated into the central element. May have a role in the synaptonemal complex assembly, stabilization and recombination. The protein is Synaptonemal complex central element protein 1 (SYCE1) of Homo sapiens (Human).